The sequence spans 343 residues: Probable beta-1,3-galactosyltransferase 13 (343 aa).

Residues 22 to 42 (LIVFTSLAIGLTGFLFGLSTI) traverse the membrane as a helical; Signal-anchor for type II membrane protein segment. Asparagine 265 carries N-linked (GlcNAc...) asparagine glycosylation.

Belongs to the glycosyltransferase 31 family. It depends on Mn(2+) as a cofactor.

It is found in the golgi apparatus membrane. Its pathway is protein modification; protein glycosylation. Functionally, beta-1,3-galactosyltransferase that transfers galactose from UDP-galactose to substrates with a terminal glycosyl residue. In Arabidopsis thaliana (Mouse-ear cress), this protein is Probable beta-1,3-galactosyltransferase 13 (B3GALT13).